A 302-amino-acid polypeptide reads, in one-letter code: tRNA dimethylallyltransferase (302 aa).

Position 9-16 (9-16 (GPTGSGKT)) interacts with ATP. Position 11–16 (11–16 (TGSGKT)) interacts with substrate.

It belongs to the IPP transferase family. Monomer. Requires Mg(2+) as cofactor.

The enzyme catalyses adenosine(37) in tRNA + dimethylallyl diphosphate = N(6)-dimethylallyladenosine(37) in tRNA + diphosphate. Catalyzes the transfer of a dimethylallyl group onto the adenine at position 37 in tRNAs that read codons beginning with uridine, leading to the formation of N6-(dimethylallyl)adenosine (i(6)A). The sequence is that of tRNA dimethylallyltransferase from Thermus thermophilus (strain ATCC BAA-163 / DSM 7039 / HB27).